A 261-amino-acid polypeptide reads, in one-letter code: Triosephosphate isomerase (261 aa).

Substrate is bound at residue 10-12; it reads NWK. The active-site Electrophile is the H100. E172 functions as the Proton acceptor in the catalytic mechanism. Substrate is bound by residues G178, S218, and 239–240; that span reads GG.

Belongs to the triosephosphate isomerase family. In terms of assembly, homodimer.

It is found in the cytoplasm. The catalysed reaction is D-glyceraldehyde 3-phosphate = dihydroxyacetone phosphate. The protein operates within carbohydrate biosynthesis; gluconeogenesis. It participates in carbohydrate degradation; glycolysis; D-glyceraldehyde 3-phosphate from glycerone phosphate: step 1/1. In terms of biological role, involved in the gluconeogenesis. Catalyzes stereospecifically the conversion of dihydroxyacetone phosphate (DHAP) to D-glyceraldehyde-3-phosphate (G3P). The chain is Triosephosphate isomerase from Mycobacteroides abscessus (strain ATCC 19977 / DSM 44196 / CCUG 20993 / CIP 104536 / JCM 13569 / NCTC 13031 / TMC 1543 / L948) (Mycobacterium abscessus).